The sequence spans 422 residues: Serine protease HTRA2, mitochondrial (422 aa).

The N-terminal 17 residues, 1–17 (MALRGSHRLEVIFKRCI), are a transit peptide targeting the mitochondrion. Positions 18–74 (ASPVFHSHAANRRSSQLAIKGTDPSSNGNSGQDQQNGEQKAKGWRRLVRFFVPFSLG) are excised as a propeptide. The span at 29 to 55 (RRSSQLAIKGTDPSSNGNSGQDQQNGE) shows a compositional bias: polar residues. The tract at residues 29-56 (RRSSQLAIKGTDPSSNGNSGQDQQNGEQ) is disordered. The chain crosses the membrane as a helical span at residues 64–82 (LVRFFVPFSLGAAVSAAVI). 2 short sequence motifs (IAP-binding) span residues 75-78 (AAVS) and 94-97 (SKMT). Positions 139–302 (SNGSGFIIEQ…IPIDYVKVFL (164 aa)) are serine protease. Residues histidine 157, aspartate 189, and serine 266 each act as charge relay system in the active site. The PDZ domain maps to 325 to 410 (MGITMLTLTP…NLDIVILRGV (86 aa)).

This sequence belongs to the peptidase S1C family. Interacts with th/DIAP1 (via BIR 2 domain).

It is found in the mitochondrion intermembrane space. The protein localises to the mitochondrion membrane. It carries out the reaction Cleavage of non-polar aliphatic amino-acids at the P1 position, with a preference for Val, Ile and Met. At the P2 and P3 positions, Arg is selected most strongly with a secondary preference for other hydrophilic residues.. In terms of biological role, serine protease that shows proteolytic activity against a non-specific substrate beta-casein. Promotes or induces cell death either by direct binding to and inhibition of BIRC proteins (also called inhibitor of apoptosis proteins, IAPs), leading to an increase in caspase activity, or by a BIRC inhibition-independent, caspase-independent and serine protease activity-dependent mechanism. Can antagonize antiapoptotic activity of th/Diap1 by directly inducing the degradation of th/Diap1. The chain is Serine protease HTRA2, mitochondrial from Drosophila yakuba (Fruit fly).